The primary structure comprises 290 residues: uncharacterized protein (290 aa).

K203 (schiff-base intermediate with substrate) is an active-site residue.

This sequence belongs to the DeoC/FbaB aldolase family.

This is an uncharacterized protein from Pasteurella multocida (strain Pm70).